A 422-amino-acid polypeptide reads, in one-letter code: O-methyltransferase kk1A (422 aa).

Residue aspartate 277 coordinates S-adenosyl-L-methionine. Residue histidine 320 is the Proton acceptor of the active site.

Belongs to the class I-like SAM-binding methyltransferase superfamily. Cation-independent O-methyltransferase family.

The protein operates within secondary metabolite biosynthesis. Functionally, O-methyltransferase; part of the gene cluster that mediates the biosynthesis of KK-1, a novel cyclic depsipeptide with 10 residues which is a promising active compound with high activity against many plant pathogens, especially Botrytis cinerea. Within the pathway, kk1A is responsible for the O-methylation of tyrosine as a free amino acid before its activation as an aminoacyl-AMP by the corresponding A domain of kk1B. The nonribosomal peptide synthetase (NRPS) kk1B catalyzes the elongation and cyclization of the decapeptide chain composed of 1 D-lactic acid residue (D-Lac), 1 pipecolic acid residue (Pip), 1 aspartic acid residue (Asp), 1 isoleucine residue (Ile), 1 glycine residue (Gly), 1 tyrosine residue (Tyr) and 4 valine residues (Val). The Asp, Ile and 3 Val residues are N-methylated by the 5 methyltransferase domains from the NRPS (found in modules 3, 5, 6, 7 and 9), whereas the Tyr residue is O-methylated by the cluster encoded O-methyltransferase kk1A. The thioesterase kk1J is likely to be involved in the corrective mechanism of peptide chain synthesis. The D-lactate dehydrogenase kk1H is involved in the synthesis of D-lactic acid from pyruvic acid, which is recognized by the A domain of the first kk1B module. The pyrroline-5-carboxylate reductase kk1I is involved in the synthesis of the L-pipecolic acid residue of KK-1 from delta-1-pyrroline-5-carboxylate (P5C), a metabolic intermediate of lysine. It is still unclear how kk1C and kk1D are involved in the production of KK-1. The polypeptide is O-methyltransferase kk1A (Curvularia clavata).